The sequence spans 264 residues: Sororin (264 aa).

Positions 1–45 are disordered; sequence MAERRTRSGGAAQRSGPRTSLTKPSKSSKRKSGSDLPNSFSEIWP. Residues Ser-20, Ser-32, Ser-34, Ser-78, and Ser-82 each carry the phosphoserine modification. The short motif at 87 to 89 is the KEN box element; it reads KEN. Thr-97 carries the post-translational modification Phosphothreonine. Ser-106 carries the phosphoserine modification. Thr-110, Thr-114, and Thr-159 each carry phosphothreonine. Residues 166-168 carry the FGF motif motif; sequence FGF. At Ser-222 the chain carries Phosphoserine. The interval 242–264 is C-terminal Sororin domain; sequence LDKWAVAMNAEFEAAEQFELLIE.

It belongs to the sororin family. As to quaternary structure, interacts with the APC/C complex. Interacts with the chromatin-bound cohesin complex; the interaction is indirect, occurs after DNA replication and requires acetylation of the cohesin component SMC3. Interacts (via the FGF motif) with PDS5A and PDS5B; the interaction is direct and prevents the interaction of PDS5A with WAPL. Phosphorylated. Phosphorylation, as cells enter mitosis, disrupts the interaction with PDS5A and relieves the inhibition of WAPL by CDCA5. Post-translationally, ubiquitinated by the APC/C complex in G1, leading to its degradation.

The protein localises to the nucleus. It is found in the chromosome. The protein resides in the cytoplasm. In terms of biological role, regulator of sister chromatid cohesion in mitosis stabilizing cohesin complex association with chromatin. May antagonize the action of WAPL which stimulates cohesin dissociation from chromatin. Cohesion ensures that chromosome partitioning is accurate in both meiotic and mitotic cells and plays an important role in DNA repair. Required for efficient DNA double-stranded break repair. This chain is Sororin (Cdca5), found in Mus musculus (Mouse).